A 336-amino-acid chain; its full sequence is Casein kinase II subunit alpha (336 aa).

The 286-residue stretch at 32–317 folds into the Protein kinase domain; the sequence is YEVVRKIGRG…AKEAMAHPYF (286 aa). Residues 38 to 46 and Lys-61 each bind ATP; that span reads IGRGKYSEV. Residue Asp-149 is the Proton acceptor of the active site.

It belongs to the protein kinase superfamily. Ser/Thr protein kinase family. CK2 subfamily. In terms of assembly, tetramer composed of two alpha chains, one beta chain and one beta' chain.

The catalysed reaction is L-seryl-[protein] + ATP = O-phospho-L-seryl-[protein] + ADP + H(+). It carries out the reaction L-threonyl-[protein] + ATP = O-phospho-L-threonyl-[protein] + ADP + H(+). Functionally, catalytic subunit of a constitutively active serine/threonine-protein kinase complex that phosphorylates a large number of substrates containing acidic residues C-terminal to the phosphorylated serine or threonine. Phosphorylates the frq clock protein thus regulating the circadian clock. The chain is Casein kinase II subunit alpha (cka) from Neurospora crassa (strain ATCC 24698 / 74-OR23-1A / CBS 708.71 / DSM 1257 / FGSC 987).